Here is a 277-residue protein sequence, read N- to C-terminus: MATPLSISSNPLTSRHCYRLHLSSTSFKGNVSVLGANPSQILSLKLNQTLKTRNQQQFARPLVVVSQTAATSSAVVAPERFRLDNLGPQPGSRKKQKRKGRGISAGQGASCGFGMRGQKSRSGPGIMRGFEGGQTALYRRLPKLRGIAGGMRSGLPKYLPVNIKDIETAGFQEGDEVSLETLKQKGLINPSGRERKLPLKILGTGELSMKLTFKARAFSTQAKEKLEASGCTLTVLPGRKKWVKPSVAKNQARADEYFAKKRAAAAEAATSEPAASA.

Residues 1-67 constitute a chloroplast transit peptide; the sequence is MATPLSISSN…FARPLVVVSQ (67 aa). Position 68 is an N-acetylthreonine (threonine 68). A disordered region spans residues 81–125; that stretch reads FRLDNLGPQPGSRKKQKRKGRGISAGQGASCGFGMRGQKSRSGPG. Over residues 92 to 101 the composition is skewed to basic residues; the sequence is SRKKQKRKGR. Over residues 103–115 the composition is skewed to gly residues; it reads ISAGQGASCGFGM.

The protein belongs to the universal ribosomal protein uL15 family. Part of the 50S ribosomal subunit.

Its subcellular location is the plastid. The protein resides in the chloroplast. In Arabidopsis thaliana (Mouse-ear cress), this protein is Large ribosomal subunit protein uL15c (RPL15).